We begin with the raw amino-acid sequence, 187 residues long: UPF0302 protein SERP1032 (187 aa).

Belongs to the UPF0302 family.

In Staphylococcus epidermidis (strain ATCC 35984 / DSM 28319 / BCRC 17069 / CCUG 31568 / BM 3577 / RP62A), this protein is UPF0302 protein SERP1032.